The sequence spans 333 residues: Starch-binding domain-containing protein 1 (333 aa).

The Extracellular segment spans residues 1 to 6 (MGAVWS). A helical membrane pass occupies residues 7 to 23 (ALLVGGGLAGALILWLL). The Cytoplasmic portion of the chain corresponds to 24 to 333 (RGDSGAPGKD…KVVHGWWGIH (310 aa)). 2 disordered regions span residues 31-73 (GKDG…ELVS) and 106-139 (NAREYVPVGKVPDTHSRANSETSRNQSPESRVGE). Positions 50–61 (PGGGPGGGGSGG) are enriched in gly residues. A Phosphoserine modification is found at serine 67. Polar residues predominate over residues 124–134 (NSETSRNQSPE). A phosphoserine mark is found at serine 135 and serine 162. The LIR signature appears at 181-187 (HEDWEVV). Serine 191, serine 192, serine 201, serine 205, serine 208, serine 216, and serine 219 each carry phosphoserine. The 100-residue stretch at 233–332 (SVKPRQVSIQ…DKVVHGWWGI (100 aa)) folds into the CBM20 domain.

In terms of assembly, interacts with the ATG8 family proteins GABARAP and GABARAPL1. Interacts with several glycogen-associated proteins, such as GYS2 (liver glycogen synthase), GDE (glycogen debranching enzyme), GBE1 (glycogen branching enzyme 1) and EPM2A (Laforin). Ubiquitinated, which leads to proteasomal degradation.

The protein resides in the preautophagosomal structure membrane. It is found in the endoplasmic reticulum membrane. It localises to the cell membrane. The protein localises to the sarcolemma. Its subcellular location is the T-tubule. In terms of biological role, acts as a cargo receptor for glycogen. Delivers its cargo to an autophagic pathway called glycophagy, resulting in the transport of glycogen to lysosomes. The chain is Starch-binding domain-containing protein 1 from Rattus norvegicus (Rat).